Reading from the N-terminus, the 285-residue chain is Bifunctional protein FolD 2 (285 aa).

Residues 164-166 (GRS), Ser189, and Val230 contribute to the NADP(+) site.

The protein belongs to the tetrahydrofolate dehydrogenase/cyclohydrolase family. In terms of assembly, homodimer.

It catalyses the reaction (6R)-5,10-methylene-5,6,7,8-tetrahydrofolate + NADP(+) = (6R)-5,10-methenyltetrahydrofolate + NADPH. The catalysed reaction is (6R)-5,10-methenyltetrahydrofolate + H2O = (6R)-10-formyltetrahydrofolate + H(+). It functions in the pathway one-carbon metabolism; tetrahydrofolate interconversion. Its function is as follows. Catalyzes the oxidation of 5,10-methylenetetrahydrofolate to 5,10-methenyltetrahydrofolate and then the hydrolysis of 5,10-methenyltetrahydrofolate to 10-formyltetrahydrofolate. The protein is Bifunctional protein FolD 2 of Geobacter sulfurreducens (strain ATCC 51573 / DSM 12127 / PCA).